Reading from the N-terminus, the 184-residue chain is Glutathione-regulated potassium-efflux system ancillary protein KefG (184 aa).

The protein belongs to the NAD(P)H dehydrogenase (quinone) family. KefG subfamily. Interacts with KefB.

The protein localises to the cell inner membrane. The enzyme catalyses a quinone + NADH + H(+) = a quinol + NAD(+). It catalyses the reaction a quinone + NADPH + H(+) = a quinol + NADP(+). Its function is as follows. Regulatory subunit of a potassium efflux system that confers protection against electrophiles. Required for full activity of KefB. This chain is Glutathione-regulated potassium-efflux system ancillary protein KefG, found in Shigella dysenteriae serotype 1 (strain Sd197).